A 113-amino-acid chain; its full sequence is Putative pterin-4-alpha-carbinolamine dehydratase (113 aa).

Belongs to the pterin-4-alpha-carbinolamine dehydratase family.

It carries out the reaction (4aS,6R)-4a-hydroxy-L-erythro-5,6,7,8-tetrahydrobiopterin = (6R)-L-erythro-6,7-dihydrobiopterin + H2O. The polypeptide is Putative pterin-4-alpha-carbinolamine dehydratase (Nitrosococcus oceani (strain ATCC 19707 / BCRC 17464 / JCM 30415 / NCIMB 11848 / C-107)).